Reading from the N-terminus, the 248-residue chain is Chromatin target of PRMT1 protein (248 aa).

Ala-2 carries the N-acetylalanine modification. Thr-33 bears the Phosphothreonine mark. Ser-40, Ser-49, and Ser-64 each carry phosphoserine. A Glycyl lysine isopeptide (Lys-Gly) (interchain with G-Cter in SUMO2) cross-link involves residue Lys-70. Residues 151–204 form a disordered region; the sequence is LRRGGVRGRGGPGRGGLGRGAMGRGGIGGRGRGMIGRGRGGFGGRGRGRGRGRG. Residues 153–206 form an interaction with PRMT1 region; it reads RGGVRGRGGPGRGGLGRGAMGRGGIGGRGRGMIGRGRGGFGGRGRGRGRGRGAL. Over residues 157–195 the composition is skewed to gly residues; sequence RGRGGPGRGGLGRGAMGRGGIGGRGRGMIGRGRGGFGGR. Residues 194 to 203 carry the GAR motif; involved in 5hmC binding motif; sequence GRGRGRGRGR. Thr-242 carries the phosphothreonine modification.

As to quaternary structure, interacts with PRMT1 and PRMT5. Interacts with the 5FMC complex; the interaction is methylation-dependent. Interacts with FYTTD1, SET and PRC1 complex members CBX4, RNF2 and PHC2; the interactions are methylation-independent. Interacts with ZNF148. Component of the transcription/export (TREX) complex at least composed of ALYREF/THOC4, DDX39B, SARNP/CIP29, CHTOP and the THO subcomplex; TREX seems to have dynamic structure involving ATP-dependent remodeling; in the complex interacts (methylated) with ALYREF/THOC4 and with DDX39B in a methylation-independent manner. Interacts (methylated) with NXF1; the interaction is mutually exclusive with the NXF1:THOC5 interaction. Interacts with WDR77 and ERH. In terms of processing, asymmetrically methylated by PRMT1. Symmetrically methylated by PRMT5. As to expression, expressed in an erythroid progenitor cell line derived from peripheral blood. Expressed in glioblastoma cells.

The protein localises to the nucleus. It localises to the nucleolus. It is found in the nucleoplasm. Its subcellular location is the nucleus speckle. Its function is as follows. Plays an important role in the ligand-dependent activation of estrogen receptor target genes. May play a role in the silencing of fetal globin genes. Recruits the 5FMC complex to ZNF148, leading to desumoylation of ZNF148 and subsequent transactivation of ZNF148 target genes. Plays an important role in the tumorigenicity of glioblastoma cells. Binds to 5-hydroxymethylcytosine (5hmC) and associates with the methylosome complex containing PRMT1, PRMT5, MEP50 and ERH. The CHTOP-methylosome complex associated with 5hmC is recruited to selective sites on the chromosome, where it methylates H4R3 and activates the transcription of genes involved in glioblastomagenesis. Required for effective mRNA nuclear export and is a component of the TREX complex which is thought to couple mRNA transcription, processing and nuclear export, and specifically associates with spliced mRNA and not with unspliced pre-mRNA. TREX is recruited to spliced mRNAs by a transcription-independent mechanism, binds to mRNA upstream of the exon-junction complex (EJC) and is recruited in a splicing- and cap-dependent manner to a region near the 5' end of the mRNA where it functions in mRNA export to the cytoplasm via the TAP/NFX1 pathway. The TREX complex is essential for the export of Kaposi's sarcoma-associated herpesvirus (KSHV) intronless mRNAs and infectious virus production. Stimulates DDX39B ATPase and helicase activities. In cooperation with ALYREF/THOC4 enhances NXF1 RNA binding activity. In Homo sapiens (Human), this protein is Chromatin target of PRMT1 protein (CHTOP).